The primary structure comprises 83 residues: Antitoxin ChpS (83 aa).

The 46-residue stretch at 3–48 (ITIKRWGNSAGMVIPNIVMKELNLQPGQSVEAQVSNNQLILTPISR) folds into the SpoVT-AbrB domain.

This sequence belongs to the PemI family. As to quaternary structure, interacts with ChpB, inhibiting its endoribonuclease activity.

Antitoxin component of a type II toxin-antitoxin (TA) system. May be involved in the regulation of cell growth. It acts as a suppressor of the endoribonuclease (inhibitory function) of ChpB protein. Both ChpS and ChpB probably bind to the promoter region of the chpS-chpB operon to autoregulate their synthesis. The chain is Antitoxin ChpS (chpS) from Escherichia coli (strain K12).